Consider the following 720-residue polypeptide: MNNHVSSTPSTMKLKQTINPILLYFIHFIISLYTILTYIPFYFLCESKQEKPNQIKAKPVSSKPDSAYRSINSVDGLASVLYPGCDTLDKVFMYAKNKFKNKRLLGTREILNEEDEIQPNGKIFKKVILGHYNWLSYEDVFIRALDFGNGLQMLGQKPKANIAIFCETRAEWMIAAQACFMYNFQLVTLYATLGGPAIVHGLNETEVTNIITSKELLQTKLKDIVSLVPRLRHIITVDGKPPTWSEFPKGVIVHTMAAVQALGVKANVEKKAHSKPLPSDIAVIMYTSGSTGIPKGVMISHSNIIASITGMARRIPRLGEEDVYIGYLPLAHVLELSAELVCLSHGCRIGYSSPQTLADQSSKIKKGSKGDTSVLKPTLMAAVPEIMDRIYKNVMNKVNEMSAFQRNLFILAYNYKMEQISKGCSTPLCDRFVFRNVRRLLGGNIRLLLCGGAPLSATTQRFMNICFCCPVGQGYGLTESTGAGTITEVWDYNTGRVGAPLVCCEIKLKNWEEGGYFNTDKPHPRGEILIGGQNVTMGYYKNEAKTKTDFFEDENGQRWLCTGDIGEFDPDGCLKIIDRKKDLVKLQAGEYVSLGKVEAALKNLPLIDNICAYANSYHSYVIGFVVPNQKELTELARTKGFKGTWEELCNSSEMENEVLKVLSEAAISASLEKFEIPLKIRLSPDPWTPETGLVTDAFKLKRKELKTHYQADIERMYGRK.

A helical; Signal-anchor for type III membrane protein transmembrane segment spans residues 21-41 (ILLYFIHFIISLYTILTYIPF). The Cytoplasmic portion of the chain corresponds to 42-720 (YFLCESKQEK…ADIERMYGRK (679 aa)). The residue at position 683 (S683) is a Phosphoserine.

This sequence belongs to the ATP-dependent AMP-binding enzyme family. It depends on Mg(2+) as a cofactor.

It is found in the mitochondrion outer membrane. Its subcellular location is the peroxisome membrane. The protein resides in the microsome membrane. It localises to the endoplasmic reticulum membrane. It catalyses the reaction a long-chain fatty acid + ATP + CoA = a long-chain fatty acyl-CoA + AMP + diphosphate. The catalysed reaction is (E)-hexadec-2-enoate + ATP + CoA = (2E)-hexadecenoyl-CoA + AMP + diphosphate. The enzyme catalyses (5Z,8Z,11Z,14Z)-eicosatetraenoate + ATP + CoA = (5Z,8Z,11Z,14Z)-eicosatetraenoyl-CoA + AMP + diphosphate. It carries out the reaction 15-hydroxy-(5Z,8Z,11Z,13E)-eicosatetraenoate + ATP + CoA = 15-hydroxy-(5Z,8Z,11Z,13E)-eicosatetraenoyl-CoA + AMP + diphosphate. It catalyses the reaction 12-hydroxy-(5Z,8Z,10E,14Z)-eicosatetraenoate + ATP + CoA = 12-hydroxy-(5Z,8Z,10E,14Z)-eicosatetraenoyl-CoA + AMP + diphosphate. The catalysed reaction is 5-hydroxy-(6E,8Z,11Z,14Z)-eicosatetraenoate + ATP + CoA = 5-hydroxy-(6E,8Z,11Z,14Z)-eicosatetraenoyl-CoA + AMP + diphosphate. The enzyme catalyses 14,15-epoxy-(5Z,8Z,11Z)-eicosatrienoate + ATP + CoA = 14,15-epoxy-(5Z,8Z,11Z)-eicosatrienoyl-CoA + AMP + diphosphate. It carries out the reaction 11,12-epoxy-(5Z,8Z,14Z)-eicosatrienoate + ATP + CoA = 11,12-epoxy-(5Z,8Z,14Z)-eicosatrienoyl-CoA + AMP + diphosphate. It catalyses the reaction a medium-chain fatty acid + ATP + CoA = a medium-chain fatty acyl-CoA + AMP + diphosphate. The catalysed reaction is hexadecanoate + ATP + CoA = hexadecanoyl-CoA + AMP + diphosphate. The enzyme catalyses tetradecanoate + ATP + CoA = tetradecanoyl-CoA + AMP + diphosphate. It carries out the reaction dodecanoate + ATP + CoA = dodecanoyl-CoA + AMP + diphosphate. It catalyses the reaction octadecanoate + ATP + CoA = octadecanoyl-CoA + AMP + diphosphate. The catalysed reaction is eicosanoate + ATP + CoA = eicosanoyl-CoA + AMP + diphosphate. The enzyme catalyses (9Z)-octadecenoate + ATP + CoA = (9Z)-octadecenoyl-CoA + AMP + diphosphate. It carries out the reaction (9Z)-hexadecenoate + ATP + CoA = (9Z)-hexadecenoyl-CoA + AMP + diphosphate. It catalyses the reaction (9Z,12Z)-octadecadienoate + ATP + CoA = (9Z,12Z)-octadecadienoyl-CoA + AMP + diphosphate. The catalysed reaction is (9Z,12Z,15Z)-octadecatrienoate + ATP + CoA = (9Z,12Z,15Z)-octadecatrienoyl-CoA + AMP + diphosphate. The enzyme catalyses (4Z,7Z,10Z,13Z,16Z,19Z)-docosahexaenoate + ATP + CoA = (4Z,7Z,10Z,13Z,16Z,19Z)-docosahexaenoyl-CoA + AMP + diphosphate. It carries out the reaction (5Z,8Z,11Z,14Z,17Z)-eicosapentaenoate + ATP + CoA = (5Z,8Z,11Z,14Z,17Z)-eicosapentaenoyl-CoA + AMP + diphosphate. It catalyses the reaction a fatty acid + ATP + CoA = a fatty acyl-CoA + AMP + diphosphate. Its function is as follows. Acyl-CoA synthetases (ACSL) activates long-chain fatty acids for both synthesis of cellular lipids, and degradation via beta-oxidation. ACSL3 is required for the incorporation of fatty acids into phosphatidylcholine, the major phospholipid located on the surface of VLDL (very low density lipoproteins). Has mainly an anabolic role in energy metabolism. Mediates hepatic lipogenesis. Preferentially uses myristate, laurate, arachidonate and eicosapentaenoate as substrates. Both isoforms exhibit the same level of activity. This Mus musculus (Mouse) protein is Fatty acid CoA ligase Acsl3.